The chain runs to 158 residues: Ribosome maturation factor RimP (158 aa).

Belongs to the RimP family.

It is found in the cytoplasm. Functionally, required for maturation of 30S ribosomal subunits. This is Ribosome maturation factor RimP from Lactiplantibacillus plantarum (strain ATCC BAA-793 / NCIMB 8826 / WCFS1) (Lactobacillus plantarum).